Consider the following 180-residue polypeptide: Translation initiation factor IF-3 (180 aa).

This sequence belongs to the IF-3 family. As to quaternary structure, monomer.

It is found in the cytoplasm. IF-3 binds to the 30S ribosomal subunit and shifts the equilibrium between 70S ribosomes and their 50S and 30S subunits in favor of the free subunits, thus enhancing the availability of 30S subunits on which protein synthesis initiation begins. The protein is Translation initiation factor IF-3 of Salmonella paratyphi A (strain ATCC 9150 / SARB42).